The following is a 453-amino-acid chain: Putative ABC transporter ATP-binding protein MM_0462 (453 aa).

The 236-residue stretch at 4-239 folds into the ABC transporter domain; it reads LETRSLKYSY…QELLKKVGLR (236 aa). 37–44 serves as a coordination point for ATP; sequence GQNGSGKS.

It belongs to the ABC transporter superfamily.

The protein resides in the cell membrane. Its function is as follows. Probably part of an ABC transporter complex. Responsible for energy coupling to the transport system. This is Putative ABC transporter ATP-binding protein MM_0462 from Methanosarcina mazei (strain ATCC BAA-159 / DSM 3647 / Goe1 / Go1 / JCM 11833 / OCM 88) (Methanosarcina frisia).